A 210-amino-acid chain; its full sequence is Ribosomal RNA small subunit methyltransferase G (210 aa).

Residues Gly75, Phe80, 98–100 (EST), 126–127 (AE), and Arg141 each bind S-adenosyl-L-methionine.

This sequence belongs to the methyltransferase superfamily. RNA methyltransferase RsmG family.

The protein resides in the cytoplasm. In terms of biological role, specifically methylates the N7 position of a guanine in 16S rRNA. This chain is Ribosomal RNA small subunit methyltransferase G, found in Solibacter usitatus (strain Ellin6076).